The following is a 354-amino-acid chain: S-adenosylmethionine:tRNA ribosyltransferase-isomerase (354 aa).

This sequence belongs to the QueA family. Monomer.

It is found in the cytoplasm. The catalysed reaction is 7-aminomethyl-7-carbaguanosine(34) in tRNA + S-adenosyl-L-methionine = epoxyqueuosine(34) in tRNA + adenine + L-methionine + 2 H(+). Its pathway is tRNA modification; tRNA-queuosine biosynthesis. Its function is as follows. Transfers and isomerizes the ribose moiety from AdoMet to the 7-aminomethyl group of 7-deazaguanine (preQ1-tRNA) to give epoxyqueuosine (oQ-tRNA). The chain is S-adenosylmethionine:tRNA ribosyltransferase-isomerase from Salmonella gallinarum (strain 287/91 / NCTC 13346).